A 1025-amino-acid chain; its full sequence is Multidrug resistance protein MdtC (1025 aa).

Transmembrane regions (helical) follow at residues 15–35 (ILISLAITLCGILGFRLLPVA), 333–353 (EVEQTLVISVALVILVVFLFL), 360–380 (LIPAVAVPVSLIGTFAAMYLC), 387–407 (LSLMALTIATGFVVDDAIVVL), 431–451 (VGFTVLSMSLSLVAVFLPLLL), 469–489 (VAIGISLAVSLTLTPMMCGWL), 528–548 (LTGLVVLGTIALSVWLYISIP), 851–871 (AQVILILAAIATVYIVLGVLY), 875–895 (VHPLTILSTLPSAGVGALLAL), 897–917 (IFDAPFSLIALIGIMLLIGIV), 953–973 (PIMMTTLAALFGALPLVLSGG), and 984–1004 (ITIVGGLVMSQLLTLYTTPVV).

It belongs to the resistance-nodulation-cell division (RND) (TC 2.A.6) family. MdtC subfamily. Part of a tripartite efflux system composed of MdtA, MdtB and MdtC. MdtC forms a heteromultimer with MdtB.

It localises to the cell inner membrane. The protein is Multidrug resistance protein MdtC of Klebsiella pneumoniae subsp. pneumoniae (strain ATCC 700721 / MGH 78578).